A 301-amino-acid chain; its full sequence is 4-hydroxy-tetrahydrodipicolinate synthase (301 aa).

Residue Thr53 coordinates pyruvate. The Proton donor/acceptor role is filled by Tyr142. The active-site Schiff-base intermediate with substrate is the Lys170. Pyruvate is bound at residue Val212.

The protein belongs to the DapA family. In terms of assembly, homotetramer; dimer of dimers.

It localises to the cytoplasm. The enzyme catalyses L-aspartate 4-semialdehyde + pyruvate = (2S,4S)-4-hydroxy-2,3,4,5-tetrahydrodipicolinate + H2O + H(+). Its pathway is amino-acid biosynthesis; L-lysine biosynthesis via DAP pathway; (S)-tetrahydrodipicolinate from L-aspartate: step 3/4. In terms of biological role, catalyzes the condensation of (S)-aspartate-beta-semialdehyde [(S)-ASA] and pyruvate to 4-hydroxy-tetrahydrodipicolinate (HTPA). In Synechocystis sp. (strain ATCC 27184 / PCC 6803 / Kazusa), this protein is 4-hydroxy-tetrahydrodipicolinate synthase.